Reading from the N-terminus, the 225-residue chain is Elongation factor 1-beta (225 aa).

Residues 2 to 84 (GFGDLKSAAG…ALGKYGPADV (83 aa)) form the GST C-terminal domain. Residues 80–114 (GPADVEDTTGSGATDSKDDDDIDLFGSDDEEESEE) are disordered. Residues 96 to 113 (KDDDDIDLFGSDDEEESE) are compositionally biased toward acidic residues. Residue S106 is modified to Phosphoserine; by CK2.

This sequence belongs to the EF-1-beta/EF-1-delta family. EF-1 is composed of 4 subunits: alpha, beta (alpha subunit of the eEF1B subcomplex), delta (beta subunit of the eEF1B subcomplex), and gamma (gamma subunit of the eEF1B subcomplex). Interacts with elongation factor EEF1A1. Post-translationally, phosphorylation affects the GDP/GTP exchange rate.

Functionally, catalytic subunit of the guanine nucleotide exchange factor (GEF) (eEF1B subcomplex) of the eukaryotic elongation factor 1 complex (eEF1). Stimulates the exchange of GDP for GTP on elongation factor 1A (eEF1A), probably by displacing GDP from the nucleotide binding pocket in eEF1A. This chain is Elongation factor 1-beta (EEF1B), found in Gallus gallus (Chicken).